Here is a 225-residue protein sequence, read N- to C-terminus: UPF0758 protein NGK_1225 (225 aa).

The MPN domain maps to Thr-102–Met-224. His-173, His-175, and Asp-186 together coordinate Zn(2+). A JAMM motif motif is present at residues His-173–Asp-186.

The protein belongs to the UPF0758 family.

The polypeptide is UPF0758 protein NGK_1225 (Neisseria gonorrhoeae (strain NCCP11945)).